The chain runs to 509 residues: Cardiolipin synthase 1 (509 aa).

The next 3 membrane-spanning stretches (helical) occupy residues 4-24 (PIIQ…LLNT), 30-50 (YTFV…VIFI), and 59-79 (LAWF…YSIF). PLD phosphodiesterase domains are found at residues 238–265 (VNYR…GDEY) and 422–449 (KDGF…DVRS). Residues H243, K245, D250, H427, K429, and D434 contribute to the active site.

This sequence belongs to the phospholipase D family. Cardiolipin synthase subfamily.

The protein localises to the cell membrane. The catalysed reaction is 2 a 1,2-diacyl-sn-glycero-3-phospho-(1'-sn-glycerol) = a cardiolipin + glycerol. Its function is as follows. Catalyzes the reversible phosphatidyl group transfer from one phosphatidylglycerol molecule to another to form cardiolipin (CL) (diphosphatidylglycerol) and glycerol. This chain is Cardiolipin synthase 1 (cls1), found in Bacillus anthracis.